The primary structure comprises 361 residues: Phospho-N-acetylmuramoyl-pentapeptide-transferase (361 aa).

A run of 10 helical transmembrane segments spans residues Leu-28–Phe-48, Ile-70–Leu-90, Leu-94–Ala-114, Val-129–Leu-149, Leu-169–Ser-189, Pro-205–Phe-225, Met-237–Phe-257, Ile-264–Ile-284, Ile-289–Val-309, and Thr-338–Leu-358.

The protein belongs to the glycosyltransferase 4 family. MraY subfamily. The cofactor is Mg(2+).

It localises to the cell inner membrane. It carries out the reaction UDP-N-acetyl-alpha-D-muramoyl-L-alanyl-gamma-D-glutamyl-meso-2,6-diaminopimeloyl-D-alanyl-D-alanine + di-trans,octa-cis-undecaprenyl phosphate = di-trans,octa-cis-undecaprenyl diphospho-N-acetyl-alpha-D-muramoyl-L-alanyl-D-glutamyl-meso-2,6-diaminopimeloyl-D-alanyl-D-alanine + UMP. It functions in the pathway cell wall biogenesis; peptidoglycan biosynthesis. Functionally, catalyzes the initial step of the lipid cycle reactions in the biosynthesis of the cell wall peptidoglycan: transfers peptidoglycan precursor phospho-MurNAc-pentapeptide from UDP-MurNAc-pentapeptide onto the lipid carrier undecaprenyl phosphate, yielding undecaprenyl-pyrophosphoryl-MurNAc-pentapeptide, known as lipid I. The sequence is that of Phospho-N-acetylmuramoyl-pentapeptide-transferase from Pelagibacter ubique (strain HTCC1062).